The following is a 369-amino-acid chain: Anhydro-N-acetylmuramic acid kinase (369 aa).

12 to 19 (GTSLDGVD) is a binding site for ATP.

Belongs to the anhydro-N-acetylmuramic acid kinase family.

The catalysed reaction is 1,6-anhydro-N-acetyl-beta-muramate + ATP + H2O = N-acetyl-D-muramate 6-phosphate + ADP + H(+). It participates in amino-sugar metabolism; 1,6-anhydro-N-acetylmuramate degradation. It functions in the pathway cell wall biogenesis; peptidoglycan recycling. Its function is as follows. Catalyzes the specific phosphorylation of 1,6-anhydro-N-acetylmuramic acid (anhMurNAc) with the simultaneous cleavage of the 1,6-anhydro ring, generating MurNAc-6-P. Is required for the utilization of anhMurNAc either imported from the medium or derived from its own cell wall murein, and thus plays a role in cell wall recycling. The protein is Anhydro-N-acetylmuramic acid kinase of Escherichia coli O8 (strain IAI1).